Here is a 684-residue protein sequence, read N- to C-terminus: Signal peptide peptidase-like 2C (684 aa).

A signal peptide spans 1-21; it reads MACLGFLLPVGFLLLISTVAG. Topologically, residues 22-186 are lumenal; sequence GKYGVAHVVS…APPEPIIDYN (165 aa). One can recognise a PA domain in the interval 83–163; the sequence is SPSQRPLRQT…HYADMLDILS (81 aa). The N-linked (GlcNAc...) asparagine glycan is linked to N100. A helical transmembrane segment spans residues 187-207; the sequence is MLVIFILAVGTVAAGGYWAGL. Topologically, residues 208–253 are cytoplasmic; that stretch reads TEANRLQRRRARRGGGSGGHHQLQEAAAAEGAQKEDNEDIPVDFTP. The disordered stretch occupies residues 216 to 242; sequence RRARRGGGSGGHHQLQEAAAAEGAQKE. Low complexity predominate over residues 227–238; sequence HHQLQEAAAAEG. A helical transmembrane segment spans residues 254–274; the sequence is AMTGVVVTLSCSLMLLLYFFY. The Lumenal segment spans residues 275 to 276; that stretch reads DH. The chain crosses the membrane as a helical span at residues 277–297; the sequence is FVYVTIGIFGLGAGIGLYSCL. Over 298-319 the chain is Cytoplasmic; that stretch reads SPLVCRLSLRQYQRPPHSLWAS. A helical membrane pass occupies residues 320-340; the sequence is LPLPLLLLASLCATVIIFWVA. The Lumenal portion of the chain corresponds to 341-346; sequence YRNEDR. A helical transmembrane segment spans residues 347 to 365; the sequence is WAWLLQDTLGISYCLFVLH. At 366–376 the chain is on the cytoplasmic side; that stretch reads RVRLPTLKNCS. Residues 377–397 form a helical membrane-spanning segment; sequence SFLLALLAFDVFFVFVTPFFT. D386 is an active-site residue. At 398 to 439 the chain is on the lumenal side; that stretch reads KTGESIMAQVALGPAESSSHERLPMVLKVPRLRVSALTLCSQ. The helical transmembrane segment at 440 to 460 threads the bilayer; that stretch reads PFSILGFGDIVVPGFLVAYCC. D448 is a catalytic residue. Residues 461-472 are Cytoplasmic-facing; it reads RFDVQVCSRQIY. Residues 473-493 form a helical membrane-spanning segment; sequence FVACTVAYAVGLLVTFMAMVL. The Lumenal portion of the chain corresponds to 494 to 495; that stretch reads MQ. Residues 496 to 516 traverse the membrane as a helical segment; the sequence is MGQPALLYLVSSTLLTSLAVA. The PAL signature appears at 499–501; sequence PAL. Residues 517 to 684 are Cytoplasmic-facing; it reads ACRQELSLFW…RKSMSTQAPL (168 aa). Residues 548-614 are disordered; it reads KQEGAADAHT…SDAHLDPNEL (67 aa). The span at 582–592 shows a compositional bias: polar residues; that stretch reads EIVTISENEAT. The segment covering 594–611 has biased composition (basic and acidic residues); it reads PEDRSDSSEGWSDAHLDP.

This sequence belongs to the peptidase A22B family. As to quaternary structure, interacts (via active sites) with FREY; the interaction stabilizes FREY1 protein and inhibits SPPL2C proteolytic activity. Glycosylated. As to expression, highly expressed in testis where it is primarily localised in spermatids (at protein level).

Its subcellular location is the endoplasmic reticulum membrane. Its function is as follows. Sperm-specific intramembrane-cleaving aspartic protease (I-CLiP) that cleaves distinct tail-anchored proteins and SNARE proteins. In elongated spermatids, modulates intracellular Ca(2+) homeostasis by controlling PLN abundance through proteolytic cleavage. During spermatogenesis, processes SNARE proteins and impacts vesicular trafficking which supports compartmental reorganization in maturating spermatids and may play a role in formation of the acrosome. Functionally, in round spermatids, acts as a scaffold protein supporting FREY1 in IZUMO1 recruitment at the endoplasmic reticulum membrane and coordination of IZUMO1 complex assembly. Stabilizes FREY1 at the endoplasmic reticulum membrane through interaction. May recruit IZUMO1 interaction partners. This Homo sapiens (Human) protein is Signal peptide peptidase-like 2C.